The chain runs to 805 residues: Transducer protein BasT (805 aa).

The next 2 membrane-spanning stretches (helical) occupy residues 25-45 (FNVLLLVVVIIVAAAGGYIHL) and 296-316 (NLAGLVVVALVGLLLVGLTVG). HAMP domains are found at residues 317-370 (RRTS…TAAS) and 437-490 (ERLE…ATLA). The Methyl-accepting transducer domain maps to 509 to 745 (SAAEIRSASD…EVVTMIDEVT (237 aa)). The interval 513–532 (IRSASDQVSESVQDISADAD) is disordered. Positions 516-526 (ASDQVSESVQD) are enriched in polar residues. Residues Glu-554, Glu-736, and Glu-763 each carry the glutamate methyl ester (Glu) modification. The segment at 752-779 (ATESQQVSAAAEEQAASVSEVAGRADDL) is disordered. The span at 754 to 773 (ESQQVSAAAEEQAASVSEVA) shows a compositional bias: low complexity.

Belongs to the methyl-accepting chemotaxis (MCP) protein family. In terms of assembly, interacts with CheA, CheY, CheW1 and CheW2. Methylated by CheR.

It localises to the cell membrane. Mediates chemotaxis towards five attractant amino acids (leucine, isoleucine, valine, methionine and cysteine). Probably transduces the signal from the substrate-binding protein BasB to the histidine kinase CheA. The polypeptide is Transducer protein BasT (basT) (Halobacterium salinarum (strain ATCC 29341 / DSM 671 / R1)).